A 413-amino-acid chain; its full sequence is Hibernation-specific plasma protein HP-55 (413 aa).

Residues 1-24 (MPSSISWGLLLLAALSCLGPGSLA) form the signal peptide. Position 25 is a pyrrolidone carboxylic acid (Q25). N65, N102, N165, and N266 each carry an N-linked (GlcNAc...) asparagine glycan. The tract at residues 368–387 (GGTVLGAEAMLQAPIMKFDR) is RCL.

Belongs to the serpin family. Plasma proteins HP-20, HP-25, HP-27 and HP-55 form a 140 kDa complex via disulfide bonds in the plasma. Post-translationally, the N-terminus is blocked. In terms of tissue distribution, plasma; synthesized in the liver.

It localises to the secreted. Its function is as follows. Protease inhibitor. The chain is Hibernation-specific plasma protein HP-55 from Tamias sibiricus (Siberian chipmunk).